The primary structure comprises 178 residues: Interleukin-10 (178 aa).

Positions 1 to 18 (MPGSALLCCLALLAGVKA) are cleaved as a signal peptide. Cystine bridges form between cysteine 30–cysteine 126 and cysteine 80–cysteine 132. The N-linked (GlcNAc...) asparagine glycan is linked to asparagine 67. Asparagine 134 carries N-linked (GlcNAc...) asparagine glycosylation.

Belongs to the IL-10 family. As to quaternary structure, homodimer. Interacts with IL10RA and IL10RB.

The protein localises to the secreted. Functionally, major immune regulatory cytokine that acts on many cells of the immune system where it has profound anti-inflammatory functions, limiting excessive tissue disruption caused by inflammation. Mechanistically, IL10 binds to its heterotetrameric receptor comprising IL10RA and IL10RB leading to JAK1 and STAT2-mediated phosphorylation of STAT3. In turn, STAT3 translocates to the nucleus where it drives expression of anti-inflammatory mediators. Targets antigen-presenting cells (APCs) such as macrophages and monocytes and inhibits their release of pro-inflammatory cytokines including granulocyte-macrophage colony-stimulating factor /GM-CSF, granulocyte colony-stimulating factor/G-CSF, IL-1 alpha, IL-1 beta, IL-6, IL-8 and TNF-alpha. Also interferes with antigen presentation by reducing the expression of MHC-class II and co-stimulatory molecules, thereby inhibiting their ability to induce T cell activation. In addition, controls the inflammatory response of macrophages by reprogramming essential metabolic pathways including mTOR signaling. The polypeptide is Interleukin-10 (IL10) (Cavia porcellus (Guinea pig)).